Here is a 537-residue protein sequence, read N- to C-terminus: Chaperonin GroEL 2 (537 aa).

ATP-binding positions include threonine 29–proline 32, aspartate 86–threonine 90, glycine 413, asparagine 477–alanine 479, and aspartate 493.

Belongs to the chaperonin (HSP60) family. In terms of assembly, forms a cylinder of 14 subunits composed of two heptameric rings stacked back-to-back. Interacts with the co-chaperonin GroES.

It localises to the cytoplasm. The enzyme catalyses ATP + H2O + a folded polypeptide = ADP + phosphate + an unfolded polypeptide.. Together with its co-chaperonin GroES, plays an essential role in assisting protein folding. The GroEL-GroES system forms a nano-cage that allows encapsulation of the non-native substrate proteins and provides a physical environment optimized to promote and accelerate protein folding. This is Chaperonin GroEL 2 from Rhodococcus jostii (strain RHA1).